Consider the following 425-residue polypeptide: Serine--tRNA ligase (425 aa).

L-serine is bound at residue 231–233; sequence TAE. 262–264 serves as a coordination point for ATP; the sequence is RSE. Glu-285 is an L-serine binding site. Position 349-352 (349-352) interacts with ATP; it reads EISS. L-serine is bound at residue Ser-385.

The protein belongs to the class-II aminoacyl-tRNA synthetase family. Type-1 seryl-tRNA synthetase subfamily. In terms of assembly, homodimer. The tRNA molecule binds across the dimer.

Its subcellular location is the cytoplasm. It carries out the reaction tRNA(Ser) + L-serine + ATP = L-seryl-tRNA(Ser) + AMP + diphosphate + H(+). It catalyses the reaction tRNA(Sec) + L-serine + ATP = L-seryl-tRNA(Sec) + AMP + diphosphate + H(+). It participates in aminoacyl-tRNA biosynthesis; selenocysteinyl-tRNA(Sec) biosynthesis; L-seryl-tRNA(Sec) from L-serine and tRNA(Sec): step 1/1. Its function is as follows. Catalyzes the attachment of serine to tRNA(Ser). Is also able to aminoacylate tRNA(Sec) with serine, to form the misacylated tRNA L-seryl-tRNA(Sec), which will be further converted into selenocysteinyl-tRNA(Sec). The chain is Serine--tRNA ligase from Exiguobacterium sibiricum (strain DSM 17290 / CCUG 55495 / CIP 109462 / JCM 13490 / 255-15).